The following is a 223-amino-acid chain: Octanoyltransferase (223 aa).

A BPL/LPL catalytic domain is found at 35–214; sequence GEARELIWLL…HFPAMLAGLR (180 aa). Residues 74–81, 145–147, and 158–160 each bind substrate; these read RGGRYTYH, AIG, and GFS. The Acyl-thioester intermediate role is filled by cysteine 176.

The protein belongs to the LipB family.

The protein localises to the cytoplasm. It catalyses the reaction octanoyl-[ACP] + L-lysyl-[protein] = N(6)-octanoyl-L-lysyl-[protein] + holo-[ACP] + H(+). Its pathway is protein modification; protein lipoylation via endogenous pathway; protein N(6)-(lipoyl)lysine from octanoyl-[acyl-carrier-protein]: step 1/2. Functionally, catalyzes the transfer of endogenously produced octanoic acid from octanoyl-acyl-carrier-protein onto the lipoyl domains of lipoate-dependent enzymes. Lipoyl-ACP can also act as a substrate although octanoyl-ACP is likely to be the physiological substrate. This Rhizorhabdus wittichii (strain DSM 6014 / CCUG 31198 / JCM 15750 / NBRC 105917 / EY 4224 / RW1) (Sphingomonas wittichii) protein is Octanoyltransferase.